The following is a 278-amino-acid chain: MTTRLDDTFARCRAEGRAALVTYVMAGDPDPETSFAVLRALPAAGADIVEFGLPFTDPMADGPAIQAAGLRALKAGQSVARTLDLVRRFRAEDPRTPVILMGYYNPIYTYGVPRFLADAVAAGVDGLIVVDLPPEEDDELCLPARQAGLAFIRLATPTTDERRLPAVLANTSGFVYYVSITGITGAATPDFGAVASAVARIRAQTALPVVVGFGVKTGEHAAAIARNADGVVVGSALVDTLARSLDLEGRATSGSVAAVLALVRDLAAGVRSAAGGAA.

Residues Glu50 and Asp61 each act as proton acceptor in the active site.

This sequence belongs to the TrpA family. Tetramer of two alpha and two beta chains.

The enzyme catalyses (1S,2R)-1-C-(indol-3-yl)glycerol 3-phosphate + L-serine = D-glyceraldehyde 3-phosphate + L-tryptophan + H2O. It participates in amino-acid biosynthesis; L-tryptophan biosynthesis; L-tryptophan from chorismate: step 5/5. In terms of biological role, the alpha subunit is responsible for the aldol cleavage of indoleglycerol phosphate to indole and glyceraldehyde 3-phosphate. This chain is Tryptophan synthase alpha chain, found in Methylobacterium nodulans (strain LMG 21967 / CNCM I-2342 / ORS 2060).